Reading from the N-terminus, the 1342-residue chain is DNA-directed RNA polymerase subunit beta (1342 aa).

This sequence belongs to the RNA polymerase beta chain family. The RNAP catalytic core consists of 2 alpha, 1 beta, 1 beta' and 1 omega subunit. When a sigma factor is associated with the core the holoenzyme is formed, which can initiate transcription.

It carries out the reaction RNA(n) + a ribonucleoside 5'-triphosphate = RNA(n+1) + diphosphate. DNA-dependent RNA polymerase catalyzes the transcription of DNA into RNA using the four ribonucleoside triphosphates as substrates. The sequence is that of DNA-directed RNA polymerase subunit beta from Yersinia pseudotuberculosis serotype O:1b (strain IP 31758).